Consider the following 333-residue polypeptide: 4-hydroxyproline epimerase (333 aa).

Catalysis depends on cysteine 90, which acts as the Proton acceptor. Substrate is bound by residues 91–92 and aspartate 249; that span reads GH. Cysteine 253 acts as the Proton donor in catalysis. Substrate is bound at residue 254–255; it reads GT.

It belongs to the proline racemase family. In terms of assembly, homodimer.

It catalyses the reaction trans-4-hydroxy-L-proline = cis-4-hydroxy-D-proline. In terms of biological role, allows intracellular utilization of 4-hydroxyproline, one of the major constituents of host collagen, by converting 4-hydroxy-L-proline to 4-hydroxy-D-proline, which can be further metabolized by intracellular 4-hydroxy-D-proline oxidases. Strong B-cell mitogen. Plays an important role in the regulation of intra- and extracellular amino acid pools, allowing the bacterium to profit from host precursors and enzymatic pathways. This is 4-hydroxyproline epimerase from Brucella canis (strain ATCC 23365 / NCTC 10854 / RM-666).